We begin with the raw amino-acid sequence, 544 residues long: MAAKEVKFGNEARIKMLEGVNILADAVKVTLGPKGRNVVLDKSFGAPTITKDGVSVAREIELEDKFQNMGAQMVKEVASKANDAAGDGTTTATVLAQAIVNEGLKAVAAGMNPMDLKRGIDKAVIAAVAELQVLSQPCADNNAIAQVGTISANSDEKVGRLIAEAMDKVGRDGVITVEDGQGLDDELAVVEGMQFDRGYLSPYFVNKPETGAVELDDPFILLVDKKVSNIREMLPVLEGVAKAGKPLLIVAEDVEGEALATLVVNTMRGIVKVAAVKAPGFGDRRKAMLQDIAMLTGGTVISEEVGMELEKATLEDLGRAKRIVITKENTTIIDGVGDAALIESRVAQIRQQIEETSSDYDREKLQERVAKLAGGVAVIKVGAATEVEMKEKKARVDDALHATRAAVEEGVVAGGGVALVRVAAKLAGLRGDNEDQNVGIKVALRAMEAPLRQIVINAGEEASVIANAVKNGEGNFGYNAYTEQYGDMLAMGILDPTKVTRSALQFASSIAGLMITTECMITELPKKDTPAMPDMGGMGGMGMM.

ATP contacts are provided by residues 30–33, lysine 51, 87–91, glycine 415, and aspartate 495; these read TLGP and DGTTT.

This sequence belongs to the chaperonin (HSP60) family. In terms of assembly, forms a cylinder of 14 subunits composed of two heptameric rings stacked back-to-back. Interacts with the co-chaperonin GroES.

It localises to the cytoplasm. It carries out the reaction ATP + H2O + a folded polypeptide = ADP + phosphate + an unfolded polypeptide.. Functionally, together with its co-chaperonin GroES, plays an essential role in assisting protein folding. The GroEL-GroES system forms a nano-cage that allows encapsulation of the non-native substrate proteins and provides a physical environment optimized to promote and accelerate protein folding. The chain is Chaperonin GroEL from Aeromonas salmonicida (strain A449).